Here is a 427-residue protein sequence, read N- to C-terminus: MENFVDENGFASLNQNIFTRDQEHMKEEDFPFEVVDQSKPTSFLQDFHHLDHDHQFDHHHHHGSSSSHPLLSVQTTSSCINNAPFEHCSYQENMVDFYETKPNLMNHHHFQAVENSYFTRNHHHHQEINLVDEHDDPMDLEQNNMMMMRMIPFDYPPTETFKPMNFVMPDEISCVSADNDCYRATSFNKTKPFLTRKLSSSSSSSSWKETKKSTLVKGQWTAEEDRVLIQLVEKYGLRKWSHIAQVLPGRIGKQCRERWHNHLRPDIKKETWSEEEDRVLIEFHKEIGNKWAEIAKRLPGRTENSIKNHWNATKRRQFSKRKCRSKYPRPSLLQDYIKSLNMGALMASSVPARGRRRESNNKKKDVVVAVEEKKKEEEVYGQDRIVPECVFTDDFGFNEKLLEEGCSIDSLLDDIPQPDIDAFVHGL.

The Nuclear localization signal 1 motif lies at 195–202 (TRKLSSSS). HTH myb-type domains lie at 212–267 (KSTL…RPDI) and 268–318 (KKET…RRQF). DNA-binding regions (H-T-H motif) lie at residues 240–263 (WSHI…HNHL) and 291–314 (WAEI…NATK). The short motif at 361–368 (NKKKDVVV) is the Nuclear localization signal 2 element.

Expressed at high levels in the synergid cells of the female gametophyte, and at lower levels in the endosperm of young seeds and the trichomes of young leaves and sepals.

It is found in the nucleus. Transcription factor that binds to the motif 5'-GTAACNT-3' in the promoter of target genes (e.g. DD11 and DD18) and promotes their expression within synergid cells (e.g. in the filiform apparatus) in ovules. Required for the formation of the filiform apparatus during synergid cell differentiation in the female gametophyte. Involved in pollen tube guidance to the micropyle. The polypeptide is Transcription factor MYB98 (Arabidopsis thaliana (Mouse-ear cress)).